Reading from the N-terminus, the 266-residue chain is Interleukin-1 beta (266 aa).

Residues 1-113 (MAPVPEPINE…ETSSDEFLCD (113 aa)) constitute a propeptide that is removed on maturation.

Belongs to the IL-1 family. In terms of assembly, monomer. In its precursor form, weakly interacts with full-length MEFV; the mature cytokine does not interact at all. Interacts with integrins ITGAV:ITGBV and ITGA5:ITGB1; integrin-binding is required for IL1B signaling. Interacts with cargo receptor TMED10; the interaction is direct and is required for the secretion of IL1B mature form. Interacts with HSP90AB1; the interaction facilitates cargo translocation into the ERGIC. Interacts with HSP90B1; the interaction facilitates cargo translocation into the ERGIC.

It is found in the cytoplasm. Its subcellular location is the cytosol. The protein localises to the secreted. It localises to the lysosome. The protein resides in the extracellular exosome. Functionally, potent pro-inflammatory cytokine. Initially discovered as the major endogenous pyrogen, induces prostaglandin synthesis, neutrophil influx and activation, T-cell activation and cytokine production, B-cell activation and antibody production, and fibroblast proliferation and collagen production. Promotes Th17 differentiation of T-cells. Synergizes with IL12/interleukin-12 to induce IFNG synthesis from T-helper 1 (Th1) cells. Plays a role in angiogenesis by inducing VEGF production synergistically with TNF and IL6. Involved in transduction of inflammation downstream of pyroptosis: its mature form is specifically released in the extracellular milieu by passing through the gasdermin-D (GSDMD) pore. The polypeptide is Interleukin-1 beta (IL1B) (Cervus elaphus (Red deer)).